The primary structure comprises 392 residues: 23S rRNA (uracil(747)-C(5))-methyltransferase RlmC (392 aa).

[4Fe-4S] cluster is bound by residues Cys-4, Cys-12, Cys-15, and Cys-93. Gln-218, Phe-247, Glu-275, and Asn-321 together coordinate S-adenosyl-L-methionine. Cys-348 functions as the Nucleophile in the catalytic mechanism.

Belongs to the class I-like SAM-binding methyltransferase superfamily. RNA M5U methyltransferase family. RlmC subfamily.

It carries out the reaction uridine(747) in 23S rRNA + S-adenosyl-L-methionine = 5-methyluridine(747) in 23S rRNA + S-adenosyl-L-homocysteine + H(+). Catalyzes the formation of 5-methyl-uridine at position 747 (m5U747) in 23S rRNA. This chain is 23S rRNA (uracil(747)-C(5))-methyltransferase RlmC, found in Haemophilus influenzae (strain PittEE).